The sequence spans 430 residues: D-galactonate transporter (430 aa).

Topologically, residues 1 to 17 (MDIPVNAAKPGRRRYLT) are cytoplasmic. A helical membrane pass occupies residues 18 to 39 (LVMIFITVVICYVDRANLAVAS). Residues Tyr-29 and Arg-32 each contribute to the D-galactonate site. At 40–50 (AHIQEEFGITK) the chain is on the periplasmic side. A helical membrane pass occupies residues 51–74 (AEMGYVFSAFAWLYTLCQIPGGWF). Tyr-64 lines the D-galactonate pocket. The Cytoplasmic portion of the chain corresponds to 75–81 (LDRVGSR). A helical membrane pass occupies residues 82–100 (VTYFIAIFGWSVATLFQGF). Topologically, residues 101–103 (ATG) are periplasmic. The helical transmembrane segment at 104-125 (LMSLIGLRAITGIFEAPAFPTN) threads the bilayer. Residues 126 to 141 (NRMVTSWFPEHERASA) are Cytoplasmic-facing. Residues 142–164 (VGFYTSGQFVGLAFLTPLLIWIQ) form a helical membrane-spanning segment. Residues 165 to 168 (EMLS) lie on the Periplasmic side of the membrane. A helical transmembrane segment spans residues 169-190 (WHWVFIVTGGIGIIWSLIWFKV). The Cytoplasmic portion of the chain corresponds to 191 to 241 (YQPPRLTKGISKAELDYIRDGGGLVDGDAPVKKEARQPLTAKDWKLVFHRK). Residues 242-267 (LIGVYLGQFAVASTLWFFLTWFPNYL) form a helical membrane-spanning segment. Residues 268-276 (TQEKGITAL) are Periplasmic-facing. Residues 277–297 (KAGFMTTVPFLAAFVGVLLSG) form a helical membrane-spanning segment. Topologically, residues 298–314 (WVADLLVRKGFSLGFAR) are cytoplasmic. Residues 315–333 (KTPIICGLLISTCIMGANY) form a helical membrane-spanning segment. Residues 334–336 (TND) are Periplasmic-facing. A helical transmembrane segment spans residues 337 to 354 (PMMIMCLMALAFFGNGFA). At 355–373 (SITWSLVSSLAPMRLIGLT) the chain is on the cytoplasmic side. Residue Trp-358 participates in D-galactonate binding. The helical transmembrane segment at 374–395 (GGVFNFAGGLGGITVPLVVGYL) threads the bilayer. Topologically, residues 396 to 400 (AQGYG) are periplasmic. The chain crosses the membrane as a helical span at residues 401–423 (FAPALVYISAVALIGALSYILLV). The Cytoplasmic portion of the chain corresponds to 424 to 430 (GDVKRVG).

Belongs to the major facilitator superfamily. Phthalate permease family.

The protein resides in the cell inner membrane. The catalysed reaction is D-galactonate(in) + H(+)(in) = D-galactonate(out) + H(+)(out). Functionally, involved in D-galactonate metabolism. Catalyzes the proton-dependent uptake of galactonate into the cell. The protein is D-galactonate transporter (dgoT) of Escherichia coli O6:H1 (strain CFT073 / ATCC 700928 / UPEC).